The primary structure comprises 348 residues: Uroporphyrinogen decarboxylase (348 aa).

Substrate is bound by residues 29–33 (RQAGR), aspartate 79, tyrosine 155, threonine 210, and histidine 326.

This sequence belongs to the uroporphyrinogen decarboxylase family. As to quaternary structure, homodimer.

The protein resides in the cytoplasm. It catalyses the reaction uroporphyrinogen III + 4 H(+) = coproporphyrinogen III + 4 CO2. Its pathway is porphyrin-containing compound metabolism; protoporphyrin-IX biosynthesis; coproporphyrinogen-III from 5-aminolevulinate: step 4/4. Its function is as follows. Catalyzes the decarboxylation of four acetate groups of uroporphyrinogen-III to yield coproporphyrinogen-III. The sequence is that of Uroporphyrinogen decarboxylase from Rhodospirillum rubrum (strain ATCC 11170 / ATH 1.1.1 / DSM 467 / LMG 4362 / NCIMB 8255 / S1).